A 233-amino-acid chain; its full sequence is Small ribosomal subunit protein uS3 (233 aa).

The region spanning valine 39–arginine 107 is the KH type-2 domain.

The protein belongs to the universal ribosomal protein uS3 family. In terms of assembly, part of the 30S ribosomal subunit. Forms a tight complex with proteins S10 and S14.

Functionally, binds the lower part of the 30S subunit head. Binds mRNA in the 70S ribosome, positioning it for translation. In Hamiltonella defensa subsp. Acyrthosiphon pisum (strain 5AT), this protein is Small ribosomal subunit protein uS3.